We begin with the raw amino-acid sequence, 470 residues long: Nuclear receptor subfamily 0 group B member 1 (470 aa).

3 consecutive repeat copies span residues 1–67 (MAGE…YRCC), 68–133 (FCGK…YRCC), and 134–200 (FCGE…YRCC). The 4 X 67 AA tandem repeats stretch occupies residues 1 to 253 (MAGENHQWQG…RPVALKSPQV (253 aa)). 3 short sequence motifs (LXXLL motif) span residues 13–17 (LYNML), 80–84 (LYSML), and 146–150 (LYSLL). A 4; truncated repeat occupies 201–253 (FCGEDHPQQGSTLYCVPTSTNQAQAAPEERPRAPWWDTSSGALRPVALKSPQV). In terms of domain architecture, NR LBD spans 205–469 (DHPQQGSTLY…DMMLEMLCTK (265 aa)). The AF-2 motif signature appears at 461-466 (MMLEML).

Belongs to the nuclear hormone receptor family. NR0 subfamily. In terms of assembly, homodimer. Interacts with NR5A1, NR5A2, NR0B2 and with COPS2. Interacts with ESRRB; represses ESRRB activity at the GATA6 promoter.

It is found in the nucleus. The protein localises to the cytoplasm. Its function is as follows. Nuclear receptor that lacks a DNA-binding domain and acts as a corepressor that inhibits the transcriptional activity of other nuclear receptors through heterodimeric interactions. Component of a cascade required for the development of the hypothalamic-pituitary-adrenal-gonadal axis. May also have a role in the development of the embryo and in the maintenance of embryonic stem cell pluripotency. The polypeptide is Nuclear receptor subfamily 0 group B member 1 (NR0B1) (Homo sapiens (Human)).